Here is an 88-residue protein sequence, read N- to C-terminus: LYR motif-containing protein 2 (88 aa).

The N-terminal 19 residues, 1–19 (MAASRLPPATLTLKQFVRR), are a transit peptide targeting the mitochondrion.

It belongs to the complex I LYR family.

Its subcellular location is the mitochondrion. Functionally, involved in efficient integration of the N-module into mitochondrial respiratory chain complex I. In Pongo abelii (Sumatran orangutan), this protein is LYR motif-containing protein 2 (LYRM2).